The following is a 165-amino-acid chain: Large ribosomal subunit protein uL10 (165 aa).

Belongs to the universal ribosomal protein uL10 family. In terms of assembly, part of the ribosomal stalk of the 50S ribosomal subunit. The N-terminus interacts with L11 and the large rRNA to form the base of the stalk. The C-terminus forms an elongated spine to which L12 dimers bind in a sequential fashion forming a multimeric L10(L12)X complex.

In terms of biological role, forms part of the ribosomal stalk, playing a central role in the interaction of the ribosome with GTP-bound translation factors. This is Large ribosomal subunit protein uL10 from Burkholderia ambifaria (strain MC40-6).